The sequence spans 863 residues: MQELYNPSEIEALVQKHWQEHKTFEVTEDESKEKFYCLSMFPYPSGRLHMGHVRNYTIGDVVARYQRLQGKNVLQPIGWDSFGLPAENAAINNKTSPAPWTYENIDYMKNQLKLLGFGYDWSREIATCTPEYYRWEQWFFTKLYEKGMVYKKTSSVNWCPNDETVLANEQVQDGCCWRCDTPVIQKEIPQWFIKITDYAEELLNDIDTLDGWPEQVKAMQRNWIGRSEGIEMTFKVKDSEQSFDIYTTRPDTLMGVTYVAIAAGHPLAEQAASTNPALAAFIEECKNADTTEAAMASMEKKGVATGLEAVHPISGKLVPIWVANFVLMNYGTGAVMSVPAHDQRDYEFAKAYGLEMQAVIKPADSEVDISKEAYTEKGVLFNSGTAFPELDGLEFQAAFDAIDARLTAEGKGKRQVNYRLRDWGVSRQRYWGAPIPMVTLADGTVMPTPEDQLPVILPEDVVMDGIQSPIKADKAWAETTVDGKPAFRETDTFDTFMESSWYYARYCSPHADEMLDPAKANYWLPVDQYIGGIEHACMHLLYFRFFHKLLRDAGLVNSNEPAKRLLTQGMVLADAYYYTNDKGARVWVSPLEAEVVEKDDKGRVVKAVDSQGNELVYTGMSKMSKSKNNGIDPQTMVEKYGADTVRLFMMFASPPELTLEWQESGVEGAHRFIKRLWKLASDHVAAGPTEALDVSKLSSSQKALRRELHKTIAKVSDDIGRRQMFNTAVAAVMELMNHLSKAPQDSAQDRALLAEALSAVTRLLYPIIPHMSFTLWHELGNSNNIEDSRWPDVDEAALVEDSKLIVVQVNGKVRAKITVAADATKEAVEQLGLDDEHVQKHLEGLTVRKVIYVPGKLLSLVAN.

Residues 42–52 (PYPSGRLHMGH) carry the 'HIGH' region motif. Residues 622–626 (KMSKS) carry the 'KMSKS' region motif. An ATP-binding site is contributed by Lys-625.

Belongs to the class-I aminoacyl-tRNA synthetase family.

The protein resides in the cytoplasm. It catalyses the reaction tRNA(Leu) + L-leucine + ATP = L-leucyl-tRNA(Leu) + AMP + diphosphate. This Shewanella denitrificans (strain OS217 / ATCC BAA-1090 / DSM 15013) protein is Leucine--tRNA ligase.